A 209-amino-acid polypeptide reads, in one-letter code: Segregation and condensation protein B (209 aa).

Belongs to the ScpB family. Homodimer. Homodimerization may be required to stabilize the binding of ScpA to the Smc head domains. Component of a cohesin-like complex composed of ScpA, ScpB and the Smc homodimer, in which ScpA and ScpB bind to the head domain of Smc. The presence of the three proteins is required for the association of the complex with DNA.

The protein localises to the cytoplasm. Its function is as follows. Participates in chromosomal partition during cell division. May act via the formation of a condensin-like complex containing Smc and ScpA that pull DNA away from mid-cell into both cell halves. The protein is Segregation and condensation protein B of Geobacillus thermodenitrificans (strain NG80-2).